Here is a 428-residue protein sequence, read N- to C-terminus: MSFKVEDLGKNMVKLTIEATAEDFDKAIEQAYQKNKGKMNVQGFRKGKAPRAIIEKMYGVGVFYEDAANFIIPEAYEQAIEESKLDVVARPEIDVVQVEKGQPFIFTAEVAVKPEVTLGAYKGVEVSKSEIEVTEDEIMAELDKVREQNSRTITVEDRAVMDKDIVTIDFEGFVDGVAFEGGKGEDYALTIGSHSFIDTFEDQLVGKNIGEDVEVNVTFPTEYHAADLAGKPALFKVKVKEIKAKELPAADDEFAGDVSEFNTLEEYKADLKKSLTEKKDKAAKTAKEDAVVDKVIENATMEIPDAMVDTQKRQMAEDFAQRLKMQGLSLEQYFQFTGLNPNTFMENLGPQALKRIQSRLVLEAVVKAENITVSVEEIDKELAEMASAYQMEVDKLKELIGEKEKEQIVMDMAVQKAIDLVASEAKEV.

The PPIase FKBP-type domain maps to 163 to 248 (KDIVTIDFEG…VKEIKAKELP (86 aa)).

It belongs to the FKBP-type PPIase family. Tig subfamily.

It localises to the cytoplasm. It carries out the reaction [protein]-peptidylproline (omega=180) = [protein]-peptidylproline (omega=0). Involved in protein export. Acts as a chaperone by maintaining the newly synthesized protein in an open conformation. Functions as a peptidyl-prolyl cis-trans isomerase. The polypeptide is Trigger factor (Lachnoclostridium phytofermentans (strain ATCC 700394 / DSM 18823 / ISDg) (Clostridium phytofermentans)).